Here is a 352-residue protein sequence, read N- to C-terminus: Chorismate synthase (352 aa).

R48 provides a ligand contact to NADP(+). FMN is bound by residues 125 to 127 (RSS), 237 to 238 (NA), G278, 293 to 297 (KPTSS), and R319.

The protein belongs to the chorismate synthase family. In terms of assembly, homotetramer. It depends on FMNH2 as a cofactor.

It catalyses the reaction 5-O-(1-carboxyvinyl)-3-phosphoshikimate = chorismate + phosphate. It functions in the pathway metabolic intermediate biosynthesis; chorismate biosynthesis; chorismate from D-erythrose 4-phosphate and phosphoenolpyruvate: step 7/7. Functionally, catalyzes the anti-1,4-elimination of the C-3 phosphate and the C-6 proR hydrogen from 5-enolpyruvylshikimate-3-phosphate (EPSP) to yield chorismate, which is the branch point compound that serves as the starting substrate for the three terminal pathways of aromatic amino acid biosynthesis. This reaction introduces a second double bond into the aromatic ring system. This Francisella tularensis subsp. holarctica (strain FTNF002-00 / FTA) protein is Chorismate synthase.